A 63-amino-acid polypeptide reads, in one-letter code: Large ribosomal subunit protein uL30 (63 aa).

Belongs to the universal ribosomal protein uL30 family. Part of the 50S ribosomal subunit.

The protein is Large ribosomal subunit protein uL30 of Rhodospirillum rubrum (strain ATCC 11170 / ATH 1.1.1 / DSM 467 / LMG 4362 / NCIMB 8255 / S1).